Reading from the N-terminus, the 368-residue chain is Proton-coupled zinc antiporter SLC30A8 (368 aa).

The Cytoplasmic segment spans residues 1–78; sequence MEFLERTYLV…AKWRLCAASA (78 aa). Zn(2+) contacts are provided by His51, Cys52, and His53. The HCH Motif; seals regulatory zinc-binding pocket motif lies at 51-53; it reads HCH. A helical transmembrane segment spans residues 79 to 99; it reads ICFFFMVAEVVGGHVAGSLAV. Over 100 to 102 the chain is Lumenal, vesicle; it reads LTD. The chain crosses the membrane as a helical span at residues 103 to 123; the sequence is AAHLLIDLTSFLLSLFSLWLS. The Zn(2+) site is built by His105 and Asp109. The Cytoplasmic portion of the chain corresponds to 124–139; that stretch reads SRPPSKRLTFGWYRAE. Residues 140–160 form a helical membrane-spanning segment; the sequence is ILGALLSVLCIWVVTGVLVYL. Over 161 to 174 the chain is Lumenal, vesicle; that stretch reads ACERLLYPDYQIQA. The helical transmembrane segment at 175–195 threads the bilayer; the sequence is GIMITVSGCAVAANIVLTLIL. Residues 196 to 216 lie on the Cytoplasmic side of the membrane; it reads HQRHLGHNHKDAQANASVRAA. Residues 217 to 237 form a helical membrane-spanning segment; that stretch reads FVHALGDVFQSTSVLISALII. Zn(2+) is bound by residues His219 and Asp223. Residues 238 to 245 are Lumenal, vesicle-facing; sequence YFKPDYKM. Residues 246 to 266 form a helical membrane-spanning segment; sequence ADPVCTFISSVLALASTVMIL. Residues 267–368 lie on the Cytoplasmic side of the membrane; that stretch reads KDFSILLMEG…SCLLCEDPQD (102 aa). Residues His300, His317, His344, Glu351, Cys360, and Cys363 each coordinate Zn(2+).

It belongs to the cation diffusion facilitator (CDF) transporter (TC 2.A.4) family. SLC30A subfamily. Homodimer. As to expression, expressed in endocrine pancreatic islet alpha and beta cells. May be more abundant in beta cells than in alpha cells. Expressed in cubical epithelium lining thyroid follicles (at protein level). In the adrenal gland, detected in the cortex, but not in the medulla (at protein level).

The protein resides in the cytoplasmic vesicle. Its subcellular location is the secretory vesicle membrane. It is found in the cell membrane. It carries out the reaction Zn(2+)(in) + 2 H(+)(out) = Zn(2+)(out) + 2 H(+)(in). In terms of biological role, proton-coupled zinc ion antiporter mediating the entry of zinc into the lumen of pancreatic beta cell secretory granules, thereby regulating insulin secretion. The protein is Proton-coupled zinc antiporter SLC30A8 of Rattus norvegicus (Rat).